A 220-amino-acid chain; its full sequence is MDFKAIAQQTAQEVLGYNRDTSGWKVVKTSKKITVSSKASRKFHGNLYRVEGIIPESPAKLSDFLYQTGDRITWDKSLQVYNMVHRIDSDTFICHTITQSFAVGSISPRDFIDLVYIKRYEGNMNIISSKSVDFPEYPPSSNYIRGYNHPCGFVCSPMEENPAYSKLVMFVQTEMRGKLSPSIIEKTMPSNLVNFILNAKDGIKAHRTPSRRGFHHNSHS.

The 208-residue stretch at 1–208 (MDFKAIAQQT…AKDGIKAHRT (208 aa)) folds into the START domain.

In terms of biological role, may be involved in the intracellular transport of sterols or other lipids. May bind cholesterol or other sterols. The sequence is that of StAR-related lipid transfer protein 6 (STARD6) from Homo sapiens (Human).